Consider the following 165-residue polypeptide: 2-C-methyl-D-erythritol 2,4-cyclodiphosphate synthase (165 aa).

Positions 11 and 13 each coordinate a divalent metal cation. 4-CDP-2-C-methyl-D-erythritol 2-phosphate contacts are provided by residues 11 to 13 (DVH) and 40 to 41 (HS). Histidine 48 provides a ligand contact to a divalent metal cation. 4-CDP-2-C-methyl-D-erythritol 2-phosphate contacts are provided by residues 62–64 (DIG), 67–71 (FPDTD), 137–140 (TTSE), phenylalanine 144, and arginine 147.

The protein belongs to the IspF family. Homotrimer. The cofactor is a divalent metal cation.

It catalyses the reaction 4-CDP-2-C-methyl-D-erythritol 2-phosphate = 2-C-methyl-D-erythritol 2,4-cyclic diphosphate + CMP. It functions in the pathway isoprenoid biosynthesis; isopentenyl diphosphate biosynthesis via DXP pathway; isopentenyl diphosphate from 1-deoxy-D-xylulose 5-phosphate: step 4/6. In terms of biological role, involved in the biosynthesis of isopentenyl diphosphate (IPP) and dimethylallyl diphosphate (DMAPP), two major building blocks of isoprenoid compounds. Catalyzes the conversion of 4-diphosphocytidyl-2-C-methyl-D-erythritol 2-phosphate (CDP-ME2P) to 2-C-methyl-D-erythritol 2,4-cyclodiphosphate (ME-CPP) with a corresponding release of cytidine 5-monophosphate (CMP). This Rubrobacter xylanophilus (strain DSM 9941 / JCM 11954 / NBRC 16129 / PRD-1) protein is 2-C-methyl-D-erythritol 2,4-cyclodiphosphate synthase.